A 328-amino-acid chain; its full sequence is MSSQVRVAVTQAEPVWLDLDATVKKTCDLIVEAAANGAQLVAFPECWIPGYPAWIWTRPVDMRLSSTYIQNSLKIDSPQMASIQKCAAENKIVVVLGFSENLHNSLYISQAIIGSDGKILTTRKKIKPTHMERTIFGDSFGDCLQSVVDTSAGRVGALSCWEHIQPLLKYHTYAQREQIHVAAWPPLFPHNEDGSLFSMSSEGTSSIARTYAIESQSFVLHTTTVIGQSGVDRMATHGGALMSTPGGGCSAIFGPDGRQLSQPIPSTEEGIIYADLDLDQIYHSKAFVDVCGHYSRPDLLWLGVEGSVKRHVRENAATVAAEAEQQEQ.

The CN hydrolase domain maps to V5–L278. E45 functions as the Proton acceptor in the catalytic mechanism. Residue K125 is part of the active site. C160 acts as the Nucleophile in catalysis.

The protein belongs to the carbon-nitrogen hydrolase superfamily. Nitrilase family.

The catalysed reaction is a nitrile + 2 H2O = a carboxylate + NH4(+). It carries out the reaction 4-chlorophenylacetonitrile + 2 H2O = 4-chlorophenylacetate + NH4(+). Functionally, nitrilase that hydrolyzes preferentially phenylacetonitrile and (R,S)-mandelonitrile. Also acts on dinitriles like phenylenediacetonitriles (PDAs) 1,2-PDA, 1,3-PDA, and 1,4-PDA, and cyanophenyl acetonitriles (CPAs) 2-CPA and 4-CPA. The chain is Arylacetonitrilase (nit2) from Aspergillus kawachii (strain NBRC 4308) (White koji mold).